Here is a 466-residue protein sequence, read N- to C-terminus: Argininosuccinate lyase (466 aa).

Belongs to the lyase 1 family. Argininosuccinate lyase subfamily.

Its subcellular location is the cytoplasm. It catalyses the reaction 2-(N(omega)-L-arginino)succinate = fumarate + L-arginine. It functions in the pathway amino-acid biosynthesis; L-arginine biosynthesis; L-arginine from L-ornithine and carbamoyl phosphate: step 3/3. The sequence is that of Argininosuccinate lyase from Synechococcus sp. (strain ATCC 27144 / PCC 6301 / SAUG 1402/1) (Anacystis nidulans).